The primary structure comprises 276 residues: Large ribosomal subunit protein uL2 (276 aa).

The disordered stretch occupies residues 221-276; that stretch reads RGSAMNPNDHPHGGGEGRAPIGRKSPMTPWGKKARGVKTRDRKKASNALIIRRRTK. Positions 252–276 are enriched in basic residues; the sequence is KKARGVKTRDRKKASNALIIRRRTK.

Belongs to the universal ribosomal protein uL2 family. As to quaternary structure, part of the 50S ribosomal subunit. Forms a bridge to the 30S subunit in the 70S ribosome.

Functionally, one of the primary rRNA binding proteins. Required for association of the 30S and 50S subunits to form the 70S ribosome, for tRNA binding and peptide bond formation. It has been suggested to have peptidyltransferase activity; this is somewhat controversial. Makes several contacts with the 16S rRNA in the 70S ribosome. This Aster yellows phytoplasma protein is Large ribosomal subunit protein uL2.